A 316-amino-acid chain; its full sequence is Inactive peptidyl-prolyl cis-trans isomerase FKBP6 (316 aa).

In terms of domain architecture, PPIase FKBP-type spans 43 to 132 (DASVLVKYSG…LFEIELLDFL (90 aa)). 3 TPR repeats span residues 160-193 (AATE…LHRR), 208-241 (LLVL…DQKN), and 242-275 (AKAL…QPFN).

This sequence belongs to the FKBP6 family. As to quaternary structure, interacts with HSP72/HSPA2 and CLTC. Interacts with GAPDH; leading to inhibit GAPDH catalytic activity. Interacts (via TPR repeats) with HSP90. As to expression, specifically expressed in testis and sperm.

It localises to the cytoplasm. It is found in the cytosol. The protein localises to the nucleus. Its function is as follows. Co-chaperone required during spermatogenesis to repress transposable elements and prevent their mobilization, which is essential for the germline integrity. Acts via the piRNA metabolic process, which mediates the repression of transposable elements during meiosis by forming complexes composed of piRNAs and Piwi proteins and govern the methylation and subsequent repression of transposons. Acts as a co-chaperone via its interaction with HSP90 and is required for the piRNA amplification process, the secondary piRNA biogenesis. May be required together with HSP90 in removal of 16 nucleotide ping-pong by-products from Piwi complexes, possibly facilitating turnover of Piwi complexes. The polypeptide is Inactive peptidyl-prolyl cis-trans isomerase FKBP6 (FKBP6) (Equus caballus (Horse)).